We begin with the raw amino-acid sequence, 272 residues long: Tryptophan synthase alpha chain (272 aa).

Active-site proton acceptor residues include Glu-49 and Glu-60.

It belongs to the TrpA family. In terms of assembly, tetramer of two alpha and two beta chains.

The enzyme catalyses (1S,2R)-1-C-(indol-3-yl)glycerol 3-phosphate + L-serine = D-glyceraldehyde 3-phosphate + L-tryptophan + H2O. It participates in amino-acid biosynthesis; L-tryptophan biosynthesis; L-tryptophan from chorismate: step 5/5. Functionally, the alpha subunit is responsible for the aldol cleavage of indoleglycerol phosphate to indole and glyceraldehyde 3-phosphate. This chain is Tryptophan synthase alpha chain, found in Legionella pneumophila (strain Lens).